A 251-amino-acid chain; its full sequence is HTH-type transcriptional regulator UlaR (251 aa).

Residues 3-58 enclose the HTH deoR-type domain; that stretch reads EAQRHQILLEMLAQLGFVTVEKVVERLGISPATARRDINKLGESGKLKKVRNGAEA. The H-T-H motif DNA-binding region spans 20 to 39; it reads VTVEKVVERLGISPATARRD.

The protein localises to the cytoplasm. Represses ulaG and the ulaABCDEF operon. In Shigella flexneri, this protein is HTH-type transcriptional regulator UlaR.